The chain runs to 520 residues: MLHKSPSRKRFASPLHLGCILTLTVLCLIAYYFALPDYLSVGKSSSRGAMDQKSDGTFRLKSIYRHGVGANHRLHQRLEVTPEVISAAGMLYQETTTQGQDFEDQEPLWTTNAEYATTNPFDFEFELRRMPLLMKRMKERDPEFIESYIYGETYMTEEEEHAMWIDDDIVAPNITDRGTVVSLALMSSNAYVRIPQTGDWRNVTEPWNETEPEDFGWDGDGIRGHVFYNEVENIVVLSIKGTSAQGLPGSGEDETTGNDKINDNLLFSCCCARVSYLWTTVCDCYVKSYICDESCLEKELRRKDRFYSAVVDIYKGVLKEYPDAAIWVTGHSLGGALASLLGRTFGLPAVAFESPGELLPSKRLHLPFPPGLPSYMEGIWHFGHNADPIFMGTCNGASSSCSLVGYAMETACHTGRVCVYDVVNDKGWSVNMFNHRIHKVIDEVLLGYEQAAKCVEPEPCVDCYNWKFIPSRDWESSSRLITKTKSHAAPTTTTRTTATTTSSSTCVGRNWLGFCTKYEL.

At 1 to 14 (MLHKSPSRKRFASP) the chain is on the cytoplasmic side. A helical; Signal-anchor for type II membrane protein transmembrane segment spans residues 15 to 35 (LHLGCILTLTVLCLIAYYFAL). At 36-520 (PDYLSVGKSS…WLGFCTKYEL (485 aa)) the chain is on the lumenal side. Asn-173, Asn-202, and Asn-208 each carry an N-linked (GlcNAc...) asparagine glycan. Catalysis depends on Ser-332, which acts as the Charge relay system.

Belongs to the AB hydrolase superfamily. Lipase family. Binds to both phosphatidylinositol (PI) and phosphatidylinositol 3,5-bisphosphate (PIP2). In terms of processing, glycosylated.

The protein resides in the endosome. The protein localises to the multivesicular body membrane. It localises to the prevacuolar compartment membrane. The catalysed reaction is a triacylglycerol + H2O = a diacylglycerol + a fatty acid + H(+). Its function is as follows. Lipase which is essential for lysis of subvacuolar cytoplasm to vacuole targeted bodies and intravacuolar autophagic bodies. Involved in the lysis of intravacuolar multivesicular body (MVB) vesicles. The intravacuolar membrane disintegration by ATG15 is critical to life span extension. This is Putative lipase ATG15 (ATG15) from Saccharomyces cerevisiae (strain ATCC 204508 / S288c) (Baker's yeast).